Reading from the N-terminus, the 644-residue chain is N-acetylgalactosaminyltransferase 4 (644 aa).

Topologically, residues 1–13 are cytoplasmic; that stretch reads MAIKKRYVKRLLR. Residues 14-34 traverse the membrane as a helical; Signal-anchor for type II membrane protein segment; sequence KVVLLLVVIVTVSLVTTLVVE. The Lumenal segment spans residues 35–644; that stretch reads RRMKNAAELT…MLDTFYDGLK (610 aa). N-linked (GlcNAc...) asparagine glycans are attached at residues Asn-157 and Asn-179. The interval 177–288 is catalytic subdomain A; it reads LPNISVIFIF…YNWLPPLIEP (112 aa). Residues Asp-218 and Arg-249 each contribute to the substrate site. Asp-272 serves as a coordination point for Mn(2+). Ser-273 is a substrate binding site. His-274 contacts Mn(2+). The catalytic subdomain B stretch occupies residues 345 to 407; it reads PYRSPVMMGG…PCSRVAHIFR (63 aa). Trp-376 contributes to the substrate binding site. His-404 contacts Mn(2+). Arg-407 lines the substrate pocket. Residues 496 to 629 enclose the Ricin B-type lectin domain; that stretch reads AAGIIQNVAN…GNDRQRWEFG (134 aa). Cys-509 and Cys-526 are disulfide-bonded. N-linked (GlcNAc...) asparagine glycosylation is found at Asn-529 and Asn-565. Intrachain disulfides connect Cys-556/Cys-573 and Cys-600/Cys-617. Asn-632 carries an N-linked (GlcNAc...) asparagine glycan.

Belongs to the glycosyltransferase 2 family. GalNAc-T subfamily. Mn(2+) is required as a cofactor. In terms of tissue distribution, expressed in developing oocytes and egg chambers. During embryonic stages 9-11, expressed in the primordium of the foregut, midgut and hindgut. During embryonic stages 12-13, shows specific expression in the proventriculus that continues until the end of embryogenesis. In third instar larvae, ubiquitously expressed in wing, eye-antennal, leg and haltere imaginal disks.

Its subcellular location is the golgi apparatus membrane. The enzyme catalyses L-seryl-[protein] + UDP-N-acetyl-alpha-D-galactosamine = a 3-O-[N-acetyl-alpha-D-galactosaminyl]-L-seryl-[protein] + UDP + H(+). The catalysed reaction is L-threonyl-[protein] + UDP-N-acetyl-alpha-D-galactosamine = a 3-O-[N-acetyl-alpha-D-galactosaminyl]-L-threonyl-[protein] + UDP + H(+). Its pathway is protein modification; protein glycosylation. Glycopeptide transferase involved in O-linked oligosaccharide biosynthesis, which catalyzes the transfer of an N-acetyl-D-galactosamine residue to an already glycosylated peptide. In contrast to other proteins of the family, it does not act as a peptide transferase that transfers GalNAc onto serine or threonine residue on the protein receptor, but instead requires the prior addition of a GalNAc on a peptide before adding additional GalNAc moieties. Some peptide transferase activity is however not excluded, considering that its appropriate peptide substrate may remain unidentified. Prefers the diglycosylated Muc5AC-3/13 as substrate. This is N-acetylgalactosaminyltransferase 4 from Drosophila melanogaster (Fruit fly).